The primary structure comprises 426 residues: Histidine--tRNA ligase (426 aa).

This sequence belongs to the class-II aminoacyl-tRNA synthetase family. As to quaternary structure, homodimer.

The protein resides in the cytoplasm. The catalysed reaction is tRNA(His) + L-histidine + ATP = L-histidyl-tRNA(His) + AMP + diphosphate + H(+). The protein is Histidine--tRNA ligase of Colwellia psychrerythraea (strain 34H / ATCC BAA-681) (Vibrio psychroerythus).